The following is a 149-amino-acid chain: Oligosaccharyltransferase complex subunit ostc (149 aa).

Residues 1-32 (MESLYRVPFTVLECPNLKLKKPSWLHMPSAMT) lie on the Cytoplasmic side of the membrane. The helical transmembrane segment at 33–53 (VYAMVVVSYFLITGGIIYDVI) threads the bilayer. The Extracellular segment spans residues 54–83 (VEPPSVGSMTDEHGHQRPVAFLAYRVNGQY). Residues 84 to 104 (IMEGLASSFLFTMGGLGFIIL) traverse the membrane as a helical segment. At 105 to 117 (DRSNAPNIPKLNR) the chain is on the cytoplasmic side. The helical transmembrane segment at 118–138 (FLLLFIGFVCVLLSFFMARVF) threads the bilayer. Over 139–149 (MRMKLPGYLMG) the chain is Extracellular.

It belongs to the OSTC family. In terms of assembly, specific component of the STT3A-containing form of the oligosaccharyltransferase (OST) complex.

Its subcellular location is the membrane. It functions in the pathway protein modification; protein glycosylation. In terms of biological role, specific component of the STT3A-containing form of the oligosaccharyl transferase (OST) complex that catalyzes the initial transfer of a defined glycan (Glc(3)Man(9)GlcNAc(2) in eukaryotes) from the lipid carrier dolichol-pyrophosphate to an asparagine residue within an Asn-X-Ser/Thr consensus motif in nascent polypeptide chains, the first step in protein N-glycosylation. N-glycosylation occurs cotranslationally and the complex associates with the Sec61 complex at the channel-forming translocon complex that mediates protein translocation across the endoplasmic reticulum (ER). All subunits are required for a maximal enzyme activity. This chain is Oligosaccharyltransferase complex subunit ostc, found in Xenopus tropicalis (Western clawed frog).